Here is a 507-residue protein sequence, read N- to C-terminus: ATP synthase subunit alpha (507 aa).

Position 170 to 177 (170 to 177 (GDRQTGKT)) interacts with ATP.

Belongs to the ATPase alpha/beta chains family. In terms of assembly, F-type ATPases have 2 components, CF(1) - the catalytic core - and CF(0) - the membrane proton channel. CF(1) has five subunits: alpha(3), beta(3), gamma(1), delta(1), epsilon(1). CF(0) has three main subunits: a(1), b(2) and c(9-12). The alpha and beta chains form an alternating ring which encloses part of the gamma chain. CF(1) is attached to CF(0) by a central stalk formed by the gamma and epsilon chains, while a peripheral stalk is formed by the delta and b chains.

It is found in the cell inner membrane. It carries out the reaction ATP + H2O + 4 H(+)(in) = ADP + phosphate + 5 H(+)(out). Its function is as follows. Produces ATP from ADP in the presence of a proton gradient across the membrane. The alpha chain is a regulatory subunit. In Thermosipho africanus (strain TCF52B), this protein is ATP synthase subunit alpha.